The primary structure comprises 250 residues: Deoxynucleoside-5'-monophosphate kinase (250 aa).

The ATP site is built by glycine 14, aspartate 16, and threonine 17. Residues valine 44, lysine 65, arginine 130, glycine 137, threonine 138, tryptophan 150, aspartate 170, arginine 172, glutamate 176, and serine 210 each coordinate dGMP.

Belongs to the dNMP kinase family. As to quaternary structure, monomer.

It carries out the reaction a 2'-deoxyribonucleoside 5'-phosphate + ATP = a 2'-deoxyribonucleoside 5'-diphosphate + ADP. Functionally, allows the synthesis of deoxyribonucleoside triphosphates necessary for the rapid viral DNA replication. Phosphorylates all four dNMPs. The enzyme had the highest activity with dAMP and had about 30% less activity with dTMP and dGMP, respectively. The lowest activity was observed with dCMP as the substrate (about 35% of that with dAMP). This chain is Deoxynucleoside-5'-monophosphate kinase, found in Escherichia coli (Enterobacteria phage T5).